A 382-amino-acid polypeptide reads, in one-letter code: D-galactonate dehydratase (382 aa).

Position 183 (aspartate 183) interacts with Mg(2+). The active-site Proton donor is the histidine 185. Glutamate 209 and glutamate 235 together coordinate Mg(2+). The active-site Proton acceptor is histidine 285.

The protein belongs to the mandelate racemase/muconate lactonizing enzyme family. GalD subfamily. The cofactor is Mg(2+).

The enzyme catalyses D-galactonate = 2-dehydro-3-deoxy-D-galactonate + H2O. It functions in the pathway carbohydrate acid metabolism; D-galactonate degradation; D-glyceraldehyde 3-phosphate and pyruvate from D-galactonate: step 1/3. Its function is as follows. Catalyzes the dehydration of D-galactonate to 2-keto-3-deoxy-D-galactonate. The polypeptide is D-galactonate dehydratase (Salmonella paratyphi A (strain AKU_12601)).